A 354-amino-acid chain; its full sequence is Lysophosphatidic acid receptor 3 (354 aa).

Over 1–31 the chain is Extracellular; that stretch reads MNECHYDKRMDFFYNRSNTDTADEWTGTKLV. N-linked (GlcNAc...) asparagine glycosylation occurs at Asn15. A helical membrane pass occupies residues 32 to 52; sequence IVLCVGTFFCLFIFFSNSLVI. Residues 53–67 are Cytoplasmic-facing; the sequence is AAVITNRKFHFPFYY. The helical transmembrane segment at 68-88 threads the bilayer; that stretch reads LLANLAAADFFAGIAYVFLMF. Residues 89–101 are Extracellular-facing; the sequence is NTGPVSKTLTVNR. A helical transmembrane segment spans residues 102–124; the sequence is WFLRQGLLDTSLTASLANLLVIA. Residues 125 to 146 are Cytoplasmic-facing; the sequence is VERHMSIMRMRVHSNLTKKRVT. The chain crosses the membrane as a helical span at residues 147 to 167; the sequence is LLILLVWAIAIFMGAVPTLGW. The Extracellular segment spans residues 168–186; that stretch reads NCLCNISACSSLAPIYSRS. Asn172 carries an N-linked (GlcNAc...) asparagine glycan. The helical transmembrane segment at 187–207 threads the bilayer; it reads YLIFWTVSNLLAFFIMVAVYV. Residues 208–240 lie on the Cytoplasmic side of the membrane; sequence RIYMYVKRKTNVLSPHTSGSISRRRAPMKLMKT. Residues 241 to 261 form a helical membrane-spanning segment; it reads VMTVLGAFVVCWTPGLVVLLL. Topologically, residues 262–276 are extracellular; that stretch reads DGLNCKQCNVQHVKR. A helical transmembrane segment spans residues 277-295; the sequence is WFLLLALLNSVMNPIIYSY. The Cytoplasmic segment spans residues 296-354; it reads KDEDMYNTMRKMICCALQDSNTERRPSRNPSTIHSRSETGSQYLEDSISQGPVCNKNGS. Cys309 is lipidated: S-palmitoyl cysteine. Residues 315–354 are disordered; sequence SNTERRPSRNPSTIHSRSETGSQYLEDSISQGPVCNKNGS. The segment covering 323 to 354 has biased composition (polar residues); sequence RNPSTIHSRSETGSQYLEDSISQGPVCNKNGS.

It belongs to the G-protein coupled receptor 1 family. As to expression, most abundantly expressed in testes, kidney, and lung, with moderate levels in small intestine, and low levels in heart, stomach, spleen, and adult and perinatal brain. Little or no expression in embryonic brain, liver, or thymus.

It localises to the cell membrane. In terms of biological role, receptor for lysophosphatidic acid (LPA), a mediator of diverse cellular activities. Seems to be coupled to the G(i)/G(o) and G(q) families of heteromeric G proteins. This Mus musculus (Mouse) protein is Lysophosphatidic acid receptor 3 (Lpar3).